Here is a 398-residue protein sequence, read N- to C-terminus: Succinate--CoA ligase [ADP-forming] subunit beta (398 aa).

The 246-residue stretch at 9 to 254 folds into the ATP-grasp domain; that stretch reads KRLLHEYGAP…TSEEDPKEIE (246 aa). Residues lysine 46, 53-55, glutamate 109, alanine 112, and glutamate 117 contribute to the ATP site; that span reads GRG. Asparagine 209 and aspartate 223 together coordinate Mg(2+). Substrate contacts are provided by residues asparagine 274 and 331–333; that span reads GIM.

This sequence belongs to the succinate/malate CoA ligase beta subunit family. As to quaternary structure, heterotetramer of two alpha and two beta subunits. It depends on Mg(2+) as a cofactor.

It carries out the reaction succinate + ATP + CoA = succinyl-CoA + ADP + phosphate. The catalysed reaction is GTP + succinate + CoA = succinyl-CoA + GDP + phosphate. The protein operates within carbohydrate metabolism; tricarboxylic acid cycle; succinate from succinyl-CoA (ligase route): step 1/1. Succinyl-CoA synthetase functions in the citric acid cycle (TCA), coupling the hydrolysis of succinyl-CoA to the synthesis of either ATP or GTP and thus represents the only step of substrate-level phosphorylation in the TCA. The beta subunit provides nucleotide specificity of the enzyme and binds the substrate succinate, while the binding sites for coenzyme A and phosphate are found in the alpha subunit. The polypeptide is Succinate--CoA ligase [ADP-forming] subunit beta (Bartonella henselae (strain ATCC 49882 / DSM 28221 / CCUG 30454 / Houston 1) (Rochalimaea henselae)).